The following is a 513-amino-acid chain: ATP synthase subunit alpha (513 aa).

An ATP-binding site is contributed by 169–176 (GDRQCGKT).

This sequence belongs to the ATPase alpha/beta chains family. As to quaternary structure, F-type ATPases have 2 components, CF(1) - the catalytic core - and CF(0) - the membrane proton channel. CF(1) has five subunits: alpha(3), beta(3), gamma(1), delta(1), epsilon(1). CF(0) has three main subunits: a(1), b(2) and c(9-12). The alpha and beta chains form an alternating ring which encloses part of the gamma chain. CF(1) is attached to CF(0) by a central stalk formed by the gamma and epsilon chains, while a peripheral stalk is formed by the delta and b chains.

It localises to the cell inner membrane. It catalyses the reaction ATP + H2O + 4 H(+)(in) = ADP + phosphate + 5 H(+)(out). Functionally, produces ATP from ADP in the presence of a proton gradient across the membrane. The alpha chain is a regulatory subunit. This is ATP synthase subunit alpha from Burkholderia vietnamiensis (strain G4 / LMG 22486) (Burkholderia cepacia (strain R1808)).